The following is a 345-amino-acid chain: Annexin A9 (345 aa).

Annexin repeat units follow at residues 41-112, 113-184, 197-266, and 270-341; these read FSAD…ALLQ, PAAH…ALAK, NLAA…NLAS, and NTPL…ALCR.

It belongs to the annexin family. As to quaternary structure, homodimer.

Functionally, may act as a low affinity receptor for acetylcholine. The protein is Annexin A9 (ANXA9) of Bos taurus (Bovine).